The following is a 419-amino-acid chain: UDP-N-acetylmuramoylalanine--D-glutamate ligase (419 aa).

109–115 (GSTGKTT) provides a ligand contact to ATP.

Belongs to the MurCDEF family.

It is found in the cytoplasm. It carries out the reaction UDP-N-acetyl-alpha-D-muramoyl-L-alanine + D-glutamate + ATP = UDP-N-acetyl-alpha-D-muramoyl-L-alanyl-D-glutamate + ADP + phosphate + H(+). The protein operates within cell wall biogenesis; peptidoglycan biosynthesis. In terms of biological role, cell wall formation. Catalyzes the addition of glutamate to the nucleotide precursor UDP-N-acetylmuramoyl-L-alanine (UMA). The polypeptide is UDP-N-acetylmuramoylalanine--D-glutamate ligase (Chlamydia felis (strain Fe/C-56) (Chlamydophila felis)).